The following is a 4466-amino-acid chain: Dynein beta chain, ciliary (4466 aa).

Residues 1–1813 form a stem region; the sequence is MGDVVDARLD…YANICDAQFK (1813 aa). 154-161 serves as a coordination point for ATP; the sequence is AGQVKGKT. 6 coiled-coil regions span residues 482 to 502, 627 to 643, 734 to 805, 1036 to 1056, 1306 to 1337, and 1443 to 1468; these read QEFL…DRRL, QKYE…EQKV, VLEV…WTKQ, TLDQ…EADE, WLEI…AWDA, and LLKS…MTSK. 4 AAA regions span residues 1814 to 2035, 2095 to 2316, 2422 to 2669, and 2767 to 3016; these read YSYE…VLVV, KVVK…IRFK, ELDP…VFQG, and TYNE…ERRY. ATP-binding positions include 1852–1859, 2133–2140, 2460–2467, and 2805–2812; these read GPAGTGKT, GNAGTGKS, GNAGLGKS, and GVGGSGKQ. Coiled coils occupy residues 3033–3134, 3263–3325, and 3573–3642; these read SLLA…AKAE, EPKR…SRTI, and QERP…EEAK. A stalk region spans residues 3033-3325; the sequence is SLLAMKSKEL…QEAEATSRTI (293 aa). AAA regions lie at residues 3409–3636 and 3846–4072; these read LTDD…EISV and VRNF…VLYN.

The protein belongs to the dynein heavy chain family. In terms of assembly, consists of at least two heavy chains (alpha and beta), three intermediate chains and several light chains.

The protein localises to the cell projection. It localises to the cilium. The protein resides in the flagellum. It is found in the cytoplasm. Its subcellular location is the cytoskeleton. The protein localises to the flagellum axoneme. In terms of biological role, force generating protein of eukaryotic cilia and flagella. Produces force towards the minus ends of microtubules. Dynein has ATPase activity; the force-producing power stroke is thought to occur on release of ADP. The protein is Dynein beta chain, ciliary of Heliocidaris crassispina (Sea urchin).